A 530-amino-acid polypeptide reads, in one-letter code: MDQFGDILEGEVDHSFFDSDFEEGKKCETNSVFDKQNDDPKERIDKDTKNVNSNTGMQTTENYLTEKGNERNVKFPPEHPVENDVTQTVSSFSLPASSRSKKLCDVTTGLKIHVSIPNRIPKIVKEGEGDYYTDGEESSDDGKKYHAKSKPAKPSTNVKKSIRKKYCKVSSSSSSSLSSSSSGSGTDCLDGGSDSHLSDSSPSSKKHVSGITLLSPKQKYKSGIKLTETQPSSTTPKCGHYPEESEDTVTDVSPLSTPDISPLQSFELGIANDQKVKVKKQENVSQEIYEDVEDLKNNSKYLKAAKKGKEKHEPDVSSKLSSVLDCSLDHRHKQKVLHDTMDLNHLLKAFLQLDKKGPQKHHFDQPSVAPGKNYSFTREEVRQIDRENQRLLKELSRQAEKPGSKSTIPRSADHPPKLYHSALSRQKEQQRIERENLALLKRLEAVKPTVGMKRSEQLMDYHRNMGYLNSSPLSRRARSTLGQYSPLRGASRTSSATSGLSCRSERSAVDPSSGHPRRRSKPPNVRTAWL.

Phosphoserine is present on Ser19. Disordered stretches follow at residues 29–83 and 116–258; these read TNSV…PVEN and IPNR…LSTP. Residues 35 to 49 are compositionally biased toward basic and acidic residues; the sequence is KQNDDPKERIDKDTK. Residues 50–63 are compositionally biased toward polar residues; the sequence is NVNSNTGMQTTENY. The segment covering 67–82 has biased composition (basic and acidic residues); sequence KGNERNVKFPPEHPVE. The segment covering 129 to 139 has biased composition (acidic residues); sequence GDYYTDGEESS. Residue Thr133 is modified to Phosphothreonine. Ser138 and Ser139 each carry phosphoserine. The segment covering 170–203 has biased composition (low complexity); it reads SSSSSSSLSSSSSGSGTDCLDGGSDSHLSDSSPS. The residue at position 215 (Ser215) is a Phosphoserine. The segment covering 227-236 has biased composition (polar residues); it reads TETQPSSTTP. Residues Ser245 and Ser327 each carry the phosphoserine modification. Positions 372–447 form a coiled coil; that stretch reads KNYSFTREEV…ALLKRLEAVK (76 aa). Disordered stretches follow at residues 395-417 and 483-530; these read LSRQ…HPPK and QYSP…TAWL. The span at 491-501 shows a compositional bias: polar residues; the sequence is SRTSSATSGLS.

The protein belongs to the CFAP97 family.

The polypeptide is Cilia- and flagella-associated protein 97 (Pongo abelii (Sumatran orangutan)).